The chain runs to 757 residues: E3 ubiquitin-protein ligase SMURF1 (757 aa).

A C2 domain is found at 1-120 (MSNPGTRRNG…TGYQRLDLCK (120 aa)). The interval 193–237 (GNCRFVESPSQDQRLQAQRLRNPDVRGSLQTPQNRPHGHQSPELP) is disordered. The residue at position 200 (Ser-200) is a Phosphoserine. 2 consecutive WW domains span residues 234-267 (PELP…DPRI) and 306-339 (GPLP…DPRL). Residues Lys-381 and Lys-383 each participate in a glycyl lysine isopeptide (Lys-Gly) (interchain with G-Cter in ubiquitin) cross-link. The HECT domain maps to 420–757 (RPKDLKKRLM…VEETCGFAVE (338 aa)). The Glycyl thioester intermediate role is filled by Cys-725.

Interacts with TRAF4. Interacts (via HECT domain) with FBXL15 (via LRR repeats). Interacts with SMAD7 and TGFBR1; SMAD7 recruits SMURF1 to TGFBR1 and regulates TGF-beta receptor degradation. Interacts with MAVS; the interaction is mediated by NDFIP1. Auto-ubiquitinated in presence of NDFIP1. Ubiquitinated by the SCF(FBXL15) complex at Lys-381 and Lys-383, leading to its degradation by the proteasome. Lys-383 is the primary ubiquitination site. As to expression, expressed in melanocytes.

The protein resides in the cytoplasm. The protein localises to the cell membrane. The enzyme catalyses S-ubiquitinyl-[E2 ubiquitin-conjugating enzyme]-L-cysteine + [acceptor protein]-L-lysine = [E2 ubiquitin-conjugating enzyme]-L-cysteine + N(6)-ubiquitinyl-[acceptor protein]-L-lysine.. It participates in protein modification; protein ubiquitination. In terms of biological role, E3 ubiquitin-protein ligase that acts as a negative regulator of BMP signaling pathway. Mediates ubiquitination and degradation of SMAD1 and SMAD5, 2 receptor-regulated SMADs specific for the BMP pathway. Promotes ubiquitination and subsequent proteasomal degradation of TRAF family members and RHOA. Promotes ubiquitination and subsequent proteasomal degradation of MAVS. Acts as an antagonist of TGF-beta signaling by ubiquitinating TGFBR1 and targeting it for degradation. Plays a role in dendrite formation by melanocytes. The protein is E3 ubiquitin-protein ligase SMURF1 (SMURF1) of Homo sapiens (Human).